A 631-amino-acid chain; its full sequence is MBT domain-containing protein 1 (631 aa).

The segment at 1–31 (MFDGYDSCSEDTSSSSSSEESEEEVAPLPSN) is disordered. Residues 45–80 (PDGKSGMATCEMCGMVGVRDAFYSKTKRFCSVSCSR) form an FCS-type zinc finger. Positions 54, 57, 74, and 78 each coordinate Zn(2+). Lys115 bears the N6-acetyllysine mark. 4 MBT repeats span residues 144–248 (FSWG…LVPP), 256–353 (TNWK…IGHR), 354–459 (FKRS…LTPP), and 467–563 (FKWF…LQPP). A disordered region spans residues 563 to 631 (PASQSSRESQ…SATVYIKQEP (69 aa)). A compositionally biased stretch (low complexity) spans 564-576 (ASQSSRESQSASS). A compositionally biased stretch (basic residues) spans 577-593 (KQKKKAKSQQYKGHKKM).

In terms of assembly, monomer. Component of the NuA4 histone acetyltransferase complex. Interacts with EPC1; interaction is direct and promotes recruitment of MBTD1 into the NuA4 histone acetyltransferase complex.

It is found in the nucleus. The protein resides in the chromosome. Chromatin reader component of the NuA4 histone acetyltransferase complex, a multiprotein complex involved in transcriptional activation of select genes principally by acetylation of nucleosomal histones H4 and H2A. The NuA4 complex plays a direct role in repair of DNA double-strand breaks (DSBs) by promoting homologous recombination (HR). MBTD1 specifically recognizes and binds monomethylated and dimethylated 'Lys-20' on histone H4 (H4K20me1 and H4K20me2, respectively). In the NuA4 complex, MBTD1 promotes recruitment of the complex to H4K20me marks by competing with TP53BP1 for binding to H4K20me. Following recruitment to H4K20me at DNA breaks, the NuA4 complex catalyzes acetylation of 'Lys-15' on histone H2A (H2AK15), blocking the ubiquitination mark required for TP53BP1 localization at DNA breaks, thereby promoting homologous recombination (HR). The sequence is that of MBT domain-containing protein 1 from Mus musculus (Mouse).